The sequence spans 167 residues: Bacterial non-heme ferritin (167 aa).

The 145-residue stretch at 1–145 (MLSKDIIKLL…DILDKIELIG (145 aa)) folds into the Ferritin-like diiron domain. 5 residues coordinate Fe cation: Glu-17, Glu-50, His-53, Glu-94, and Gln-127.

The protein belongs to the ferritin family. Prokaryotic subfamily. As to quaternary structure, homooligomer of 24 subunits that assemble into a spherical protein shell (12 +/- 1 nM diameter) that can sequester at least 2000 iron atoms.

The protein resides in the cytoplasm. It carries out the reaction 4 Fe(2+) + O2 + 6 H2O = 4 iron(III) oxide-hydroxide + 12 H(+). Functionally, iron-storage protein. This chain is Bacterial non-heme ferritin (ftnA), found in Helicobacter pylori (strain J99 / ATCC 700824) (Campylobacter pylori J99).